The following is a 95-amino-acid chain: Large ribosomal subunit protein uL23 (95 aa).

The protein belongs to the universal ribosomal protein uL23 family. In terms of assembly, part of the 50S ribosomal subunit. Contacts protein L29, and trigger factor when it is bound to the ribosome.

One of the early assembly proteins it binds 23S rRNA. One of the proteins that surrounds the polypeptide exit tunnel on the outside of the ribosome. Forms the main docking site for trigger factor binding to the ribosome. In Coxiella burnetii (strain RSA 493 / Nine Mile phase I), this protein is Large ribosomal subunit protein uL23.